The chain runs to 229 residues: Cytidylate kinase (229 aa).

Position 12–20 (12–20) interacts with ATP; the sequence is GPSGVGKST.

It belongs to the cytidylate kinase family. Type 1 subfamily.

It is found in the cytoplasm. The enzyme catalyses CMP + ATP = CDP + ADP. It catalyses the reaction dCMP + ATP = dCDP + ADP. The polypeptide is Cytidylate kinase (Mesomycoplasma hyopneumoniae (strain 232) (Mycoplasma hyopneumoniae)).